Here is a 188-residue protein sequence, read N- to C-terminus: dCTP deaminase (188 aa).

Residues 111 to 116 (KSTYAR), 135 to 137 (TLE), glutamine 156, tyrosine 170, and glutamine 180 each bind dCTP. Glutamate 137 serves as the catalytic Proton donor/acceptor.

This sequence belongs to the dCTP deaminase family. In terms of assembly, homotrimer.

It catalyses the reaction dCTP + H2O + H(+) = dUTP + NH4(+). Its pathway is pyrimidine metabolism; dUMP biosynthesis; dUMP from dCTP (dUTP route): step 1/2. Catalyzes the deamination of dCTP to dUTP. The protein is dCTP deaminase of Neisseria meningitidis serogroup C / serotype 2a (strain ATCC 700532 / DSM 15464 / FAM18).